The primary structure comprises 382 residues: Beta-1,4-galactosyltransferase 6 (382 aa).

Topologically, residues Met1–Leu15 are cytoplasmic. A helical; Signal-anchor for type II membrane protein transmembrane segment spans residues Ile16–Ala35. Over Pro36–Tyr382 the chain is Lumenal. Residues Asn71, Asn75, Asn83, Asn84, Asn99, and Asn122 are each glycosylated (N-linked (GlcNAc...) asparagine). The cysteines at positions 108 and 152 are disulfide-linked. UDP-alpha-D-galactose is bound by residues Pro163–Arg167, Phe202–Arg204, Val229–Asp230, Tyr258, and Trp290. Cys223 and Cys242 are disulfide-bonded. Residue Asp230 participates in Mn(2+) binding. Gly292–Asp295 contacts N-acetyl-D-glucosamine. A glycan (N-linked (GlcNAc...) asparagine) is linked at Asn307. His323 contributes to the Mn(2+) binding site. His323–His324 is a UDP-alpha-D-galactose binding site. Arg334 lines the N-acetyl-D-glucosamine pocket. An N-linked (GlcNAc...) asparagine glycan is attached at Asn367.

This sequence belongs to the glycosyltransferase 7 family. Mn(2+) is required as a cofactor. It depends on Mg(2+) as a cofactor. Requires Ca(2+) as cofactor. Highest expression in brain with lower levels found in lungs, heart, skeletal muscle and kidney. Lowest expression in testis, liver and spleen.

The protein localises to the golgi apparatus. The protein resides in the golgi stack membrane. It catalyses the reaction a beta-D-glucosyl-(1&lt;-&gt;1')-N-acylsphing-4-enine + UDP-alpha-D-galactose = a beta-D-Gal-(1-&gt;4)-beta-D-Glc-(1&lt;-&gt;1)-Cer(d18:1(4E)) + UDP + H(+). It participates in protein modification; protein glycosylation. The protein operates within sphingolipid metabolism. Inhibited by EDTA. Functionally, catalyzes the synthesis of lactosylceramide (LacCer) via the transfer of galactose from UDP-galactose to glucosylceramide (GlcCer). LacCer is the starting point in the biosynthesis of all gangliosides (membrane-bound glycosphingolipids) which play pivotal roles in the CNS including neuronal maturation and axonal and myelin formation. This chain is Beta-1,4-galactosyltransferase 6, found in Rattus norvegicus (Rat).